The following is a 985-amino-acid chain: Rho guanine nucleotide exchange factor 2 (985 aa).

The interval 1–32 is disordered; sequence MSRIESLTRARIDRSKEQATKTREKEKMKEAK. A Phorbol-ester/DAG-type zinc finger spans residues 39–86; it reads GHLFTTISVSGMTMCYACNKSITAKEALICPTCNVTIHNRCKDTLANC. A phosphoserine mark is found at serine 109, serine 122, serine 129, serine 133, and serine 137. The segment at 131–161 is interaction with DYNLT1; sequence RQSLLGSRRGLSSLSLAKSVSTTNIAGHFND. Phosphoserine; by PAK4 is present on serine 143. 5 positions are modified to phosphoserine: serine 151, serine 163, serine 172, serine 174, and serine 177. In terms of domain architecture, DH spans 236–433; the sequence is KKQDVIYELI…KELLSNVDQD (198 aa). N6-acetyllysine is present on lysine 354. The region spanning 473–572 is the PH domain; it reads KLIHDGCLLW…WIRVIQQSVR (100 aa). Positions 591–615 form a coiled coil; it reads LRRIKTKLQQKNQALVELLQMNVEL. 2 positions are modified to phosphoserine: serine 646 and serine 649. Position 680 is a phosphothreonine; by MAPK1 or MAPK3 (threonine 680). Phosphoserine is present on residues serine 692, serine 710, and serine 781. A Phosphothreonine modification is found at threonine 795. The stretch at 797–866 forms a coiled coil; it reads EKQATELALL…RQLAALGQNE (70 aa). Phosphoserine is present on serine 885. 2 disordered regions span residues 890 to 909 and 918 to 985; these read DALY…DRLD and HRPF…ASES. Residue tyrosine 893 is modified to Phosphotyrosine. Serine 895 is subject to Phosphoserine; by PAK4. Residues 919–938 show a composition bias toward basic and acidic residues; sequence RPFDDREAQELGSPEDRLQD. Residues serine 931, serine 939, and serine 940 each carry the phosphoserine modification. Positions 940–949 are enriched in acidic residues; that stretch reads SDPDTCSEEE. Threonine 944 carries the post-translational modification Phosphothreonine. Phosphoserine is present on residues serine 946, serine 951, serine 952, serine 955, and serine 959.

In terms of assembly, found in a complex composed at least of ARHGEF2, NOD2 and RIPK2. Interacts with RIPK2; the interaction mediates tyrosine phosphorylation of RIPK2 by Src kinase CSK. Interacts with RIPK1 and RIPK3. Interacts with YWHAZ/14-3-3 zeta; when phosphorylated at Ser-885. Interacts with the kinases PAK4, AURKA and MAPK1. Interacts with RHOA and RAC1. Interacts with NOD1. Interacts (via the N- terminal zinc finger) with CAPN6 (via domain II). Interacts with DYNLT1. Post-translationally, phosphorylation of Ser-885 by PAK1 induces binding to protein YWHAZ, promoting its relocation to microtubules and the inhibition of its activity. Phosphorylated by AURKA and CDK1 during mitosis, which negatively regulates its activity. Phosphorylation by MAPK1 or MAPK3 increases nucleotide exchange activity. Phosphorylation by PAK4 releases GEF-H1 from the microtubules. Phosphorylated on serine, threonine and tyrosine residues in a RIPK2-dependent manner.

Its subcellular location is the cytoplasm. It localises to the cytoskeleton. The protein localises to the cell junction. It is found in the tight junction. The protein resides in the golgi apparatus. Its subcellular location is the spindle. It localises to the cytoplasmic vesicle. Functionally, activates Rho-GTPases by promoting the exchange of GDP for GTP. May be involved in epithelial barrier permeability, cell motility and polarization, dendritic spine morphology, antigen presentation, leukemic cell differentiation, cell cycle regulation, innate immune response, and cancer. Binds Rac-GTPases, but does not seem to promote nucleotide exchange activity toward Rac-GTPases. May stimulate instead the cortical activity of Rac. Inactive toward CDC42, TC10, or Ras-GTPases. Forms an intracellular sensing system along with NOD1 for the detection of microbial effectors during cell invasion by pathogens. Involved in innate immune signaling transduction pathway promoting cytokine IL6/interleukin-6 and TNF-alpha secretion in macrophage upon stimulation by bacterial peptidoglycans; acts as a signaling intermediate between NOD2 receptor and RIPK2 kinase. Contributes to the tyrosine phosphorylation of RIPK2 through Src tyrosine kinase leading to NF-kappaB activation by NOD2. Overexpression activates Rho-, but not Rac-GTPases, and increases paracellular permeability. Involved in neuronal progenitor cell division and differentiation. Involved in the migration of precerebellar neurons. In Rattus norvegicus (Rat), this protein is Rho guanine nucleotide exchange factor 2 (Arhgef2).